Consider the following 117-residue polypeptide: Large ribosomal subunit protein bL20 (117 aa).

Belongs to the bacterial ribosomal protein bL20 family.

Functionally, binds directly to 23S ribosomal RNA and is necessary for the in vitro assembly process of the 50S ribosomal subunit. It is not involved in the protein synthesizing functions of that subunit. This is Large ribosomal subunit protein bL20 from Streptococcus suis (strain 05ZYH33).